We begin with the raw amino-acid sequence, 625 residues long: Beta-galactosidase large subunit (625 aa).

Residue E465 is the Proton donor of the active site. E533 serves as the catalytic Nucleophile.

Belongs to the glycosyl hydrolase 2 family. In terms of assembly, heterodimer of a large (LacL) and a small subunit (LacM).

The enzyme catalyses Hydrolysis of terminal non-reducing beta-D-galactose residues in beta-D-galactosides.. Component of a beta-galactosidase. The chain is Beta-galactosidase large subunit from Latilactobacillus sakei (Lactobacillus sakei).